A 231-amino-acid polypeptide reads, in one-letter code: 7-cyano-7-deazaguanine synthase (231 aa).

ATP is bound at residue 8-18 (FSGGQDSTTCL). Residues cysteine 187, cysteine 196, cysteine 199, and cysteine 202 each coordinate Zn(2+).

The protein belongs to the QueC family. Zn(2+) serves as cofactor.

The enzyme catalyses 7-carboxy-7-deazaguanine + NH4(+) + ATP = 7-cyano-7-deazaguanine + ADP + phosphate + H2O + H(+). It participates in purine metabolism; 7-cyano-7-deazaguanine biosynthesis. Functionally, catalyzes the ATP-dependent conversion of 7-carboxy-7-deazaguanine (CDG) to 7-cyano-7-deazaguanine (preQ(0)). This is 7-cyano-7-deazaguanine synthase from Vibrio vulnificus (strain CMCP6).